A 498-amino-acid polypeptide reads, in one-letter code: ATP synthase subunit beta, chloroplastic (498 aa).

Position 172-179 (172-179 (GGAGVGKT)) interacts with ATP.

Belongs to the ATPase alpha/beta chains family. In terms of assembly, F-type ATPases have 2 components, CF(1) - the catalytic core - and CF(0) - the membrane proton channel. CF(1) has five subunits: alpha(3), beta(3), gamma(1), delta(1), epsilon(1). CF(0) has four main subunits: a(1), b(1), b'(1) and c(9-12).

It is found in the plastid. The protein resides in the chloroplast thylakoid membrane. It carries out the reaction ATP + H2O + 4 H(+)(in) = ADP + phosphate + 5 H(+)(out). Functionally, produces ATP from ADP in the presence of a proton gradient across the membrane. The catalytic sites are hosted primarily by the beta subunits. In Phoenix dactylifera (Date palm), this protein is ATP synthase subunit beta, chloroplastic.